The primary structure comprises 326 residues: Peroxidase 3 (326 aa).

The first 24 residues, 1–24 (MNCLIAIALSVSFFLVGIVGPIQA), serve as a signal peptide directing secretion. Intrachain disulfides connect C35/C113, C68/C73, C119/C321, and C198/C231. H66 acts as the Proton acceptor in catalysis. Ca(2+) contacts are provided by D67, V70, G72, D74, and S76. N-linked (GlcNAc...) asparagine glycans are attached at residues N80 and N138. Position 161 (P161) interacts with substrate. N166 is a glycosylation site (N-linked (GlcNAc...) asparagine). H191 provides a ligand contact to heme b. Residue T192 participates in Ca(2+) binding. 2 N-linked (GlcNAc...) asparagine glycosylation sites follow: N207 and N237. Ca(2+) is bound by residues D244, S247, and D252.

Belongs to the peroxidase family. Classical plant (class III) peroxidase subfamily. Heme b is required as a cofactor. The cofactor is Ca(2+). As to expression, expressed in root cells.

The protein resides in the secreted. It carries out the reaction 2 a phenolic donor + H2O2 = 2 a phenolic radical donor + 2 H2O. In terms of biological role, removal of H(2)O(2), oxidation of toxic reductants, biosynthesis and degradation of lignin, suberization, auxin catabolism, response to environmental stresses such as wounding, pathogen attack and oxidative stress. These functions might be dependent on each isozyme/isoform in each plant tissue. This is Peroxidase 3 (PER3) from Arabidopsis thaliana (Mouse-ear cress).